Consider the following 96-residue polypeptide: Protein Vpr (96 aa).

The interval 1 to 42 (MEQPPEDQGPQREPYNEWTLELLEELKNEAVRHFPREYLHGL) is homooligomerization. Serine 79, serine 94, and serine 96 each carry phosphoserine; by host.

It belongs to the HIV-1 VPR protein family. As to quaternary structure, homooligomer, may form homodimer. Interacts with p6-gag region of the Pr55 Gag precursor protein through a (Leu-X-X)4 motif near the C-terminus of the P6gag protein. Interacts with host UNG. May interact with host RAD23A/HHR23A. Interacts with host VPRBP/DCAF1, leading to hijack the CUL4A-RBX1-DDB1-DCAF1/VPRBP complex, mediating ubiquitination of host proteins such as TERT and ZGPAT and arrest of the cell cycle in G2 phase. In terms of processing, phosphorylated on several residues by host. These phosphorylations regulate VPR activity for the nuclear import of the HIV-1 pre-integration complex.

It localises to the virion. Its subcellular location is the host nucleus. The protein localises to the host extracellular space. In terms of biological role, during virus replication, may deplete host UNG protein, and incude G2-M cell cycle arrest. Acts by targeting specific host proteins for degradation by the 26S proteasome, through association with the cellular CUL4A-DDB1 E3 ligase complex by direct interaction with host VPRPB/DCAF-1. Cell cycle arrest reportedly occurs within hours of infection and is not blocked by antiviral agents, suggesting that it is initiated by the VPR carried into the virion. Additionally, VPR induces apoptosis in a cell cycle dependent manner suggesting that these two effects are mechanistically linked. Detected in the serum and cerebrospinal fluid of AIDS patient, VPR may also induce cell death to bystander cells. During virus entry, plays a role in the transport of the viral pre-integration (PIC) complex to the host nucleus. This function is crucial for viral infection of non-dividing macrophages. May act directly at the nuclear pore complex, by binding nucleoporins phenylalanine-glycine (FG)-repeat regions. The sequence is that of Protein Vpr from Homo sapiens (Human).